Reading from the N-terminus, the 734-residue chain is Diacylglycerol kinase alpha (734 aa).

2 EF-hand domains span residues R109–M144 and E154–L189. Positions 122, 124, 126, 133, 167, 169, 171, 173, and 178 each coordinate Ca(2+). 2 consecutive Phorbol-ester/DAG-type zinc fingers follow at residues Q204 to C252 and T268 to C318. Residues N358–P505 form a necessary and sufficient for the diacylglycerol kinase activity region. The DAGKc domain maps to S371–P505. K483 bears the N6-acetyllysine mark.

It belongs to the eukaryotic diacylglycerol kinase family. Monomer.

The protein resides in the cytoplasm. It localises to the cytosol. The enzyme catalyses a 1,2-diacyl-sn-glycerol + ATP = a 1,2-diacyl-sn-glycero-3-phosphate + ADP + H(+). It catalyses the reaction a 1-O-alkyl-sn-glycerol + ATP = a 1-O-alkyl-sn-glycero-3-phosphate + ADP + H(+). It carries out the reaction 1-O-alkyl-2-acyl-sn-glycerol + ATP = 1-O-alkyl-2-acyl-sn-glycero-3-phosphate + ADP + H(+). The catalysed reaction is 1,2-dihexadecanoyl-sn-glycerol + ATP = 1,2-dihexadecanoyl-sn-glycero-3-phosphate + ADP + H(+). The enzyme catalyses 1-hexadecanoyl-2-(9Z-octadecenoyl)-sn-glycerol + ATP = 1-hexadecanoyl-2-(9Z-octadecenoyl)-sn-glycero-3-phosphate + ADP + H(+). It catalyses the reaction 2-(9Z-octadecenoyl)-glycerol + ATP = 2-(9Z-octadecenoyl)-sn-glycero-3-phosphate + ADP + H(+). It carries out the reaction 1,2-di-(9Z-octadecenoyl)-sn-glycerol + ATP = 1,2-di-(9Z-octadecenoyl)-sn-glycero-3-phosphate + ADP + H(+). The catalysed reaction is 1-octadecanoyl-2-(5Z,8Z,11Z,14Z-eicosatetraenoyl)-sn-glycerol + ATP = 1-octadecanoyl-2-(5Z,8Z,11Z,14Z-eicosatetraenoyl)-sn-glycero-3-phosphate + ADP + H(+). The enzyme catalyses 1,2-didecanoyl-sn-glycerol + ATP = 1,2-didecanoyl-sn-glycero-3-phosphate + ADP + H(+). It catalyses the reaction 1-O-hexadecyl-2-acetyl-sn-glycerol + ATP = 1-O-hexadecyl-2-acetyl-sn-glycero-3-phosphate + ADP + H(+). It carries out the reaction 1-O-hexadecyl-2-(5Z,8Z,11Z,14Z-eicosatetraenoyl)-sn-glycerol + ATP = 1-O-hexadecyl-2-(5Z,8Z,11Z,14Z-eicosatetraenoyl)-sn-glycero-3-phosphate + ADP + H(+). The catalysed reaction is 1-O-hexadecyl-2-(9Z-octadecenoyl)-sn-glycerol + ATP = 1-O-hexadecyl-2-(9Z-octadecenoyl)-sn-glycero-3-phosphate + ADP + H(+). The enzyme catalyses 1-O-hexadecyl-sn-glycerol + ATP = 1-O-hexadecyl-sn-glycero-3-phosphate + ADP + H(+). It participates in lipid metabolism; glycerolipid metabolism. Its activity is regulated as follows. Stimulated by calcium and phosphatidylserine. Its function is as follows. Diacylglycerol kinase that converts diacylglycerol/DAG into phosphatidic acid/phosphatidate/PA and regulates the respective levels of these two bioactive lipids. Thereby, acts as a central switch between the signaling pathways activated by these second messengers with different cellular targets and opposite effects in numerous biological processes. Also plays an important role in the biosynthesis of complex lipids. Can also phosphorylate 1-alkyl-2-acylglycerol in vitro as efficiently as diacylglycerol provided it contains an arachidonoyl group. Also involved in the production of alkyl-lysophosphatidic acid, another bioactive lipid, through the phosphorylation of 1-alkyl-2-acetyl glycerol. This chain is Diacylglycerol kinase alpha (DGKA), found in Sus scrofa (Pig).